A 25-amino-acid polypeptide reads, in one-letter code: Phospholipase A1 verutoxin-2a (25 aa).

The protein belongs to the AB hydrolase superfamily. Lipase family. Post-translationally, contains six disulfide bonds. As to expression, expressed by the venom gland.

It localises to the secreted. The catalysed reaction is a 1,2-diacyl-sn-glycero-3-phosphocholine + H2O = a 2-acyl-sn-glycero-3-phosphocholine + a fatty acid + H(+). It carries out the reaction 1-(9Z-octadecenoyl)-2-hexadecanoyl-sn-glycero-3-phosphocholine + H2O = 2-hexadecanoyl-sn-glycero-3-phosphocholine + (9Z)-octadecenoate + H(+). The enzyme catalyses a 1-acyl-sn-glycero-3-phosphocholine + H2O = sn-glycerol 3-phosphocholine + a fatty acid + H(+). It participates in phospholipid metabolism. Its activity is regulated as follows. Activity is maximal in the presence of calcium. However, unlike phospholipases A2 whose catalytic activity is strictly calcium-dependent, this enzyme shows considerable catalytic activity on phosphatidylcholine emulsified in calcium free solution; the catalytic activity of VT-2a assayed in the absence of calcium ions is 18-20% of that assayed in solution containing calcium ions. Functionally, catalyzes the hydrolysis of glycerophospholipids such as phosphatidylcholine (1,2-diacyl-sn-glycero-3-phosphocholine) and has a moderate activity to hydrolyze lysoglycerophospholipids such as lysophosphatidylcholine (1-acyl-sn-glycero-3-phosphocholine), but is unable to hydrolyze sphingomyelin. In addition to acting as an allergen, it possesses a potent hemolytic activity on red blood cells of mice (98.8% of hemolysis at 3.0 ug/ml). The polypeptide is Phospholipase A1 verutoxin-2a (Vespa velutina (Asian yellow-legged hornet)).